Consider the following 412-residue polypeptide: Multifunctional CCA protein (412 aa).

2 residues coordinate ATP: Gly8 and Arg11. Positions 8 and 11 each coordinate CTP. Mg(2+) contacts are provided by Asp21 and Asp23. Positions 91, 137, and 140 each coordinate ATP. Positions 91, 137, and 140 each coordinate CTP. Residues 228 to 329 form the HD domain; sequence TGIHTLMTLS…VKLFDSIDAW (102 aa).

This sequence belongs to the tRNA nucleotidyltransferase/poly(A) polymerase family. Bacterial CCA-adding enzyme type 1 subfamily. As to quaternary structure, monomer. Can also form homodimers and oligomers. Mg(2+) serves as cofactor. Requires Ni(2+) as cofactor.

The enzyme catalyses a tRNA precursor + 2 CTP + ATP = a tRNA with a 3' CCA end + 3 diphosphate. The catalysed reaction is a tRNA with a 3' CCA end + 2 CTP + ATP = a tRNA with a 3' CCACCA end + 3 diphosphate. In terms of biological role, catalyzes the addition and repair of the essential 3'-terminal CCA sequence in tRNAs without using a nucleic acid template. Adds these three nucleotides in the order of C, C, and A to the tRNA nucleotide-73, using CTP and ATP as substrates and producing inorganic pyrophosphate. tRNA 3'-terminal CCA addition is required both for tRNA processing and repair. Also involved in tRNA surveillance by mediating tandem CCA addition to generate a CCACCA at the 3' terminus of unstable tRNAs. While stable tRNAs receive only 3'-terminal CCA, unstable tRNAs are marked with CCACCA and rapidly degraded. This chain is Multifunctional CCA protein, found in Escherichia coli O139:H28 (strain E24377A / ETEC).